The chain runs to 924 residues: Inositol polyphosphate 4-phosphatase type II (924 aa).

Positions methionine 1–glutamine 13 are enriched in basic and acidic residues. Disordered stretches follow at residues methionine 1–proline 24, isoleucine 481–tyrosine 516, and aspartate 546–serine 570. In terms of domain architecture, C2 spans aspartate 23–leucine 165.

Belongs to the inositol 3,4-bisphosphate 4-phosphatase family. As to expression, widely expressed with highest levels occurring in the skeletal muscle and heart.

It carries out the reaction a 1,2-diacyl-sn-glycero-3-phospho-(1D-myo-inositol-3,4-bisphosphate) + H2O = a 1,2-diacyl-sn-glycero-3-phospho-(1D-myo-inositol-3-phosphate) + phosphate. It catalyses the reaction 1D-myo-inositol 1,3,4-trisphosphate + H2O = 1D-myo-inositol 1,3-bisphosphate + phosphate. The catalysed reaction is 1D-myo-inositol 3,4-bisphosphate + H2O = 1D-myo-inositol 3-phosphate + phosphate. It functions in the pathway signal transduction; phosphatidylinositol signaling pathway. With respect to regulation, strongly inhibited by inositol hexakisphosphate. Its function is as follows. Catalyzes the hydrolysis of the 4-position phosphate of phosphatidylinositol 3,4-bisphosphate, inositol 1,3,4-trisphosphate and inositol 3,4-trisphosphate. Plays a role in the late stages of macropinocytosis by dephosphorylating phosphatidylinositol 3,4-bisphosphate in membrane ruffles. The lipid phosphatase activity is critical for tumor suppressor function. Antagonizes the PI3K-AKT/PKB signaling pathway by dephosphorylating phosphoinositides and thereby modulating cell cycle progression and cell survival. The polypeptide is Inositol polyphosphate 4-phosphatase type II (INPP4B) (Homo sapiens (Human)).